A 142-amino-acid polypeptide reads, in one-letter code: ATP synthase F(0) complex subunit C3, mitochondrial (142 aa).

The N-terminal 67 residues, 1 to 67 (MFACAKLACT…REFQTSAISR (67 aa)), are a transit peptide targeting the mitochondrion. Residues 83–103 (VGVAGSGAGIGTVFGSLIIGY) form a helical membrane-spanning segment. Residue K110 is modified to N6,N6,N6-trimethyllysine. A helical membrane pass occupies residues 118 to 138 (ILGFALSEAMGLFCLMVAFLI).

This sequence belongs to the ATPase C chain family. In terms of assembly, F-type ATPases have 2 components, CF(1) - the catalytic core - and CF(0) - the membrane proton channel. CF(1) has five subunits: alpha(3), beta(3), gamma(1), delta(1), epsilon(1). CF(0) has three main subunits: a, b and c. Interacts with TMEM70 and TMEM242. Post-translationally, trimethylated by ATPSCKMT at Lys-110. Methylation is required for proper incorporation of the C subunit into the ATP synthase complex and mitochondrial respiration.

It is found in the mitochondrion membrane. Its function is as follows. Mitochondrial membrane ATP synthase (F(1)F(0) ATP synthase or Complex V) produces ATP from ADP in the presence of a proton gradient across the membrane which is generated by electron transport complexes of the respiratory chain. F-type ATPases consist of two structural domains, F(1) - containing the extramembraneous catalytic core and F(0) - containing the membrane proton channel, linked together by a central stalk and a peripheral stalk. During catalysis, ATP synthesis in the catalytic domain of F(1) is coupled via a rotary mechanism of the central stalk subunits to proton translocation. Part of the complex F(0) domain. A homomeric c-ring of probably 10 subunits is part of the complex rotary element. The chain is ATP synthase F(0) complex subunit C3, mitochondrial from Homo sapiens (Human).